Here is a 142-residue protein sequence, read N- to C-terminus: Hemoglobin subunit alpha (142 aa).

Residues 2–142 form the Globin domain; it reads VLSPADKSNV…VSTVLTSKYR (141 aa). Ser4 carries the post-translational modification Phosphoserine. N6-succinyllysine is present on residues Lys8 and Lys12. Residue Lys17 is modified to N6-acetyllysine; alternate. At Lys17 the chain carries N6-succinyllysine; alternate. A Phosphotyrosine modification is found at Tyr25. Position 36 is a phosphoserine (Ser36). Residue Lys41 is modified to N6-succinyllysine. Ser50 is subject to Phosphoserine. An O2-binding site is contributed by His59. His88 is a heme b binding site. A Phosphoserine modification is found at Ser103. Residue Thr109 is modified to Phosphothreonine. Phosphoserine is present on residues Ser125 and Ser132. Thr135 and Thr138 each carry phosphothreonine. Ser139 bears the Phosphoserine mark.

It belongs to the globin family. As to quaternary structure, heterotetramer of two alpha chains and two beta chains. In terms of tissue distribution, red blood cells.

Involved in oxygen transport from the lung to the various peripheral tissues. Its function is as follows. Hemopressin acts as an antagonist peptide of the cannabinoid receptor CNR1. Hemopressin-binding efficiently blocks cannabinoid receptor CNR1 and subsequent signaling. The protein is Hemoglobin subunit alpha (HBA) of Ateles geoffroyi (Black-handed spider monkey).